The chain runs to 790 residues: Type VI secretion system spike protein VgrG5 (790 aa).

2 stretches are compositionally biased toward basic and acidic residues: residues 753 to 763 (GFRDYRAEMPQ) and 772 to 790 (AYRR…EPTP). The tract at residues 753–790 (GFRDYRAEMPQHKPRSAPDAYRRDASRPGAADKDEPTP) is disordered.

This sequence belongs to the VgrG protein family.

The protein resides in the secreted. Its function is as follows. Part of the H2 type VI secretion system (H2-T6SS) specialized secretion system, which delivers several virulence factors in both prokaryotic and eukaryotic cells during infection. Allows the delivery of the phospholipase effector PldB to target cells where it exerts its toxicity. Also plays a role in VgrG4b and its effector PldA secretion. This is Type VI secretion system spike protein VgrG5 from Pseudomonas aeruginosa (strain ATCC 15692 / DSM 22644 / CIP 104116 / JCM 14847 / LMG 12228 / 1C / PRS 101 / PAO1).